Here is a 243-residue protein sequence, read N- to C-terminus: TIGR03089 family protein (243 aa).

This sequence belongs to the TIGR03089 family.

The sequence is that of TIGR03089 family protein from Mycobacterium tuberculosis (strain ATCC 25618 / H37Rv).